Consider the following 416-residue polypeptide: Cyclin-L1-1 (416 aa).

A disordered region spans residues 286–416 (KCTAGSANND…DSSKDRRRHH (131 aa)). 4 stretches are compositionally biased toward basic and acidic residues: residues 304-315 (PHEKATDSKKSG), 328-374 (SYER…DKLK), 384-393 (RLKDSGGHSD), and 401-410 (RDRDYRDSSK).

Belongs to the cyclin family. Cyclin L subfamily. Forms a complex with CDKG1. Interacts with MOS4 and associates with the spliceosome.

It is found in the nucleus. In terms of biological role, cognate cyclin for CDKG1. Required for synapsis and male meiosis, and for the proper splicing of specific resistance (R) genes. Involved in regulation of DNA methylation and transcriptional silencing. This Arabidopsis thaliana (Mouse-ear cress) protein is Cyclin-L1-1 (CYCL1-1).